Consider the following 423-residue polypeptide: MTDKLIIRGGKKLAGTLQVDGAKNSAVALIPAAILAESEVVLEGLPDISDVHTLYNILEELGGTVRYDNKTAVIDPTDMISMPLPSGNVKKLRASYYLMGAMLGRFKKAVIGLPGGCYLGPRPIDQHIKGFEALGAKVTNEQGAIYLRADELKGARIYLDVVSVGATINIMLAAVRAKGKTVIENAAKEPEIIDVATLLTNMGAIIKGAGTDTIRITGVEHLHGCHHTIIPDRIEAGTFMVLAAASGKGVRIENVIPTHLEGIIAKLTEMGVPMDIEEDAIFVGEVEKIKKVDIKTYAYPGFPTDLQQPLTALLTRAEGSSVITDTIYPSRFKHIAEIERMGGKFKLEGRSAVINGPVQLQGSKVTATDLRAGAALVIAALLADGETEIHGVEHIERGYSKIIEKLSAIGANITRSSAAETKL.

23-24 is a binding site for phosphoenolpyruvate; that stretch reads KN. Position 93 (arginine 93) interacts with UDP-N-acetyl-alpha-D-glucosamine. Cysteine 117 (proton donor) is an active-site residue. Residue cysteine 117 is modified to 2-(S-cysteinyl)pyruvic acid O-phosphothioketal. Residues 122 to 126, aspartate 305, and isoleucine 327 contribute to the UDP-N-acetyl-alpha-D-glucosamine site; that span reads RPIDQ.

This sequence belongs to the EPSP synthase family. MurA subfamily.

It is found in the cytoplasm. It catalyses the reaction phosphoenolpyruvate + UDP-N-acetyl-alpha-D-glucosamine = UDP-N-acetyl-3-O-(1-carboxyvinyl)-alpha-D-glucosamine + phosphate. Its pathway is cell wall biogenesis; peptidoglycan biosynthesis. Functionally, cell wall formation. Adds enolpyruvyl to UDP-N-acetylglucosamine. In Listeria monocytogenes serotype 4b (strain F2365), this protein is UDP-N-acetylglucosamine 1-carboxyvinyltransferase 2.